The chain runs to 496 residues: Probable cytosol aminopeptidase (496 aa).

Residues lysine 266 and aspartate 271 each contribute to the Mn(2+) site. The active site involves lysine 278. 3 residues coordinate Mn(2+): aspartate 289, aspartate 348, and glutamate 350. The active site involves arginine 352.

The protein belongs to the peptidase M17 family. Mn(2+) is required as a cofactor.

It localises to the cytoplasm. It carries out the reaction Release of an N-terminal amino acid, Xaa-|-Yaa-, in which Xaa is preferably Leu, but may be other amino acids including Pro although not Arg or Lys, and Yaa may be Pro. Amino acid amides and methyl esters are also readily hydrolyzed, but rates on arylamides are exceedingly low.. It catalyses the reaction Release of an N-terminal amino acid, preferentially leucine, but not glutamic or aspartic acids.. Its function is as follows. Presumably involved in the processing and regular turnover of intracellular proteins. Catalyzes the removal of unsubstituted N-terminal amino acids from various peptides. The protein is Probable cytosol aminopeptidase of Pseudomonas syringae pv. syringae (strain B728a).